The primary structure comprises 283 residues: Cyclin-C (283 aa).

Positions 46–144 (NVIQALGEHL…VLECEFYLLE (99 aa)) constitute a Cyclin N-terminal domain. The tract at residues 252-283 (TILSKMPKPKPPPNSEGEQGPNGSQNSSYSQS) is disordered. Residues 272–283 (PNGSQNSSYSQS) show a composition bias toward polar residues. Ser275 is subject to Phosphoserine.

The protein belongs to the cyclin family. Cyclin C subfamily. As to quaternary structure, component of the Mediator complex, which is composed of MED1, MED4, MED6, MED7, MED8, MED9, MED10, MED11, MED12, MED13, MED13L, MED14, MED15, MED16, MED17, MED18, MED19, MED20, MED21, MED22, MED23, MED24, MED25, MED26, MED27, MED29, MED30, MED31, CCNC, CDK8 and CDC2L6/CDK11. The MED12, MED13, CCNC and CDK8 subunits form a distinct module termed the CDK8 module. Mediator containing the CDK8 module is less active than Mediator lacking this module in supporting transcriptional activation. Individual preparations of the Mediator complex lacking one or more distinct subunits have been variously termed ARC, CRSP, DRIP, PC2, SMCC and TRAP. The cylin/CDK pair formed by CCNC/CDK8 also associates with the large subunit of RNA polymerase II.

It is found in the nucleus. Component of the Mediator complex, a coactivator involved in regulated gene transcription of nearly all RNA polymerase II-dependent genes. Mediator functions as a bridge to convey information from gene-specific regulatory proteins to the basal RNA polymerase II transcription machinery. Mediator is recruited to promoters by direct interactions with regulatory proteins and serves as a scaffold for the assembly of a functional preinitiation complex with RNA polymerase II and the general transcription factors. Binds to and activates cyclin-dependent kinase CDK8 that phosphorylates the CTD (C-terminal domain) of the large subunit of RNA polymerase II (RNAp II), which may inhibit the formation of a transcription initiation complex. This chain is Cyclin-C (CCNC), found in Bos taurus (Bovine).